Reading from the N-terminus, the 101-residue chain is Cell division protein FtsB (101 aa).

Topologically, residues 1–3 (MRI) are cytoplasmic. A helical transmembrane segment spans residues 4–21 (VIYSMLVLLIAIQYPLWL). Residues 22-101 (GKGGWLKVYE…KSSDTQVTKQ (80 aa)) are Periplasmic-facing. Residues 33–53 (ERQVELQEAKNSLLALRNAKL) adopt a coiled-coil conformation.

The protein belongs to the FtsB family. As to quaternary structure, part of a complex composed of FtsB, FtsL and FtsQ.

Its subcellular location is the cell inner membrane. Its function is as follows. Essential cell division protein. May link together the upstream cell division proteins, which are predominantly cytoplasmic, with the downstream cell division proteins, which are predominantly periplasmic. The polypeptide is Cell division protein FtsB (Polynucleobacter necessarius subsp. necessarius (strain STIR1)).